Consider the following 130-residue polypeptide: Secreted RxLR effector protein 66 (130 aa).

Positions methionine 1–alanine 21 are cleaved as a signal peptide. Residues arginine 32–arginine 62 carry the RxLR-dEER motif. The helical transmembrane segment at glycine 104–isoleucine 124 threads the bilayer.

Belongs to the RxLR effector family.

Its subcellular location is the secreted. It localises to the host cytoplasm. The protein resides in the host nucleus. The protein localises to the membrane. Its function is as follows. Effector that acts as a broad suppressor of cell death to interrupt plant immunity. Inhibits cell death induced by cell death-inducing proteins, including the PAMP elicitor INF1 from P.infestans. This is Secreted RxLR effector protein 66 from Plasmopara viticola (Downy mildew of grapevine).